Here is a 245-residue protein sequence, read N- to C-terminus: Adenosylcobinamide-GDP ribazoletransferase (245 aa).

Transmembrane regions (helical) follow at residues 31-51 (LLHYPAVGLFLGALLWLAALL), 57-77 (PLLQAALLLALWVALTGALHL), 109-129 (VAVVVLVIMLLLKFSALLVVL), 134-154 (PAALVLAPLLGRAALLALFLC), and 176-196 (ALMVLALVVIGCLLLGATGLL).

Belongs to the CobS family. The cofactor is Mg(2+).

It is found in the cell inner membrane. The catalysed reaction is alpha-ribazole + adenosylcob(III)inamide-GDP = adenosylcob(III)alamin + GMP + H(+). The enzyme catalyses alpha-ribazole 5'-phosphate + adenosylcob(III)inamide-GDP = adenosylcob(III)alamin 5'-phosphate + GMP + H(+). It participates in cofactor biosynthesis; adenosylcobalamin biosynthesis; adenosylcobalamin from cob(II)yrinate a,c-diamide: step 7/7. In terms of biological role, joins adenosylcobinamide-GDP and alpha-ribazole to generate adenosylcobalamin (Ado-cobalamin). Also synthesizes adenosylcobalamin 5'-phosphate from adenosylcobinamide-GDP and alpha-ribazole 5'-phosphate. The sequence is that of Adenosylcobinamide-GDP ribazoletransferase from Stutzerimonas stutzeri (strain A1501) (Pseudomonas stutzeri).